We begin with the raw amino-acid sequence, 259 residues long: Thiazole synthase (259 aa).

Lys-95 (schiff-base intermediate with DXP) is an active-site residue. 1-deoxy-D-xylulose 5-phosphate is bound by residues Gly-156, 182–183 (AG), and 204–205 (NT).

This sequence belongs to the ThiG family. In terms of assembly, homotetramer. Forms heterodimers with either ThiH or ThiS.

Its subcellular location is the cytoplasm. The catalysed reaction is [ThiS sulfur-carrier protein]-C-terminal-Gly-aminoethanethioate + 2-iminoacetate + 1-deoxy-D-xylulose 5-phosphate = [ThiS sulfur-carrier protein]-C-terminal Gly-Gly + 2-[(2R,5Z)-2-carboxy-4-methylthiazol-5(2H)-ylidene]ethyl phosphate + 2 H2O + H(+). It participates in cofactor biosynthesis; thiamine diphosphate biosynthesis. Functionally, catalyzes the rearrangement of 1-deoxy-D-xylulose 5-phosphate (DXP) to produce the thiazole phosphate moiety of thiamine. Sulfur is provided by the thiocarboxylate moiety of the carrier protein ThiS. In vitro, sulfur can be provided by H(2)S. The chain is Thiazole synthase from Proteus mirabilis (strain HI4320).